A 278-amino-acid chain; its full sequence is MNATLRILAWLIAVALVALPVVAVLNGWVGAERWPLARLRVSGDFKRVPAEELRAVVLPYARSGFFAVKLQDAQDAIARLPWVESAQVRKRWPDVLEVHVVEHKPFARWGTDRMLSEQGRLFRTPPLLKDFKLPQLGGPDAKTQEVVALYNESRALFAPTGLDVERLEMDARGSWSLGLSNGVQIVIGRDDARARLQRFARVLPQLTDPQRPIARADLRYTNGFTVERRMENGESGMDKKPKPVPPAAPHALVLNSLRLRTPLLTIPHSPFAIPGFKT.

Residues 1 to 6 (MNATLR) are Cytoplasmic-facing. The helical transmembrane segment at 7 to 27 (ILAWLIAVALVALPVVAVLNG) threads the bilayer. Residues 28–278 (WVGAERWPLA…SPFAIPGFKT (251 aa)) are Periplasmic-facing. In terms of domain architecture, POTRA spans 34–103 (WPLARLRVSG…DVLEVHVVEH (70 aa)).

The protein belongs to the FtsQ/DivIB family. FtsQ subfamily. Part of a complex composed of FtsB, FtsL and FtsQ.

It localises to the cell inner membrane. Functionally, essential cell division protein. May link together the upstream cell division proteins, which are predominantly cytoplasmic, with the downstream cell division proteins, which are predominantly periplasmic. May control correct divisome assembly. The protein is Cell division protein FtsQ of Xanthomonas campestris pv. campestris (strain ATCC 33913 / DSM 3586 / NCPPB 528 / LMG 568 / P 25).